The chain runs to 139 residues: Nucleoside diphosphate kinase (139 aa).

Positions 11, 59, 87, 93, 104, and 114 each coordinate ATP. The active-site Pros-phosphohistidine intermediate is the histidine 117.

It belongs to the NDK family. As to quaternary structure, homotetramer. It depends on Mg(2+) as a cofactor.

It is found in the cytoplasm. It catalyses the reaction a 2'-deoxyribonucleoside 5'-diphosphate + ATP = a 2'-deoxyribonucleoside 5'-triphosphate + ADP. The catalysed reaction is a ribonucleoside 5'-diphosphate + ATP = a ribonucleoside 5'-triphosphate + ADP. Its function is as follows. Major role in the synthesis of nucleoside triphosphates other than ATP. The ATP gamma phosphate is transferred to the NDP beta phosphate via a ping-pong mechanism, using a phosphorylated active-site intermediate. This Wolbachia pipientis subsp. Culex pipiens (strain wPip) protein is Nucleoside diphosphate kinase.